The following is a 306-amino-acid chain: Reticulocalbin-2 (306 aa).

The signal sequence occupies residues 1-22; it reads MESPTLLGLLLLLLGGPGTSLG. 6 consecutive EF-hand domains span residues 50–85, 86–121, 144–173, 175–210, 226–251, and 252–287; these read EQQKRLKVIISRIDVDLDGFLTEAELSSWIQHSFKS, YIIEDAKQQFQHYDKDGDGRVSWEEYNIQMYDRVID, KKRFQKANKDGDSHLDFEEFAAFEHPEEAD, MKEFVIQESLEEHDKDGDGFVSLQEFLGDYRRDPAA, NDYDKDKDGKLSPKELLTWVMPNNEG, and LAQEEAVHLLDEMDLDGDRRLSANEILENQDLFLNS. Residues aspartate 99, aspartate 101, aspartate 103, arginine 105, and glutamate 110 each contribute to the Ca(2+) site. Residues aspartate 188, aspartate 190, aspartate 192, glutamate 199, aspartate 229, aspartate 231, aspartate 233, lysine 235, glutamate 240, aspartate 265, aspartate 267, aspartate 269, arginine 271, and glutamate 276 each contribute to the Ca(2+) site.

Belongs to the CREC family. As to quaternary structure, may bind phospholipase A2, since the rat reticulocalbin-2 has been isolated on the phospholipase complex taipoxin columns. As to expression, expressed by the venom gland.

Its subcellular location is the secreted. This chain is Reticulocalbin-2, found in Crotalus adamanteus (Eastern diamondback rattlesnake).